We begin with the raw amino-acid sequence, 221 residues long: U1 small nuclear ribonucleoprotein C (221 aa).

The Matrin-type zinc-finger motif lies at His4–Glu36. The disordered stretch occupies residues Gly80–Arg221. The segment covering Tyr142 to Asp158 has biased composition (pro residues). Low complexity predominate over residues Pro178–Pro190. The span at Ser191 to Leu204 shows a compositional bias: pro residues.

It belongs to the U1 small nuclear ribonucleoprotein C family. U1 snRNP is composed of the 7 core Sm proteins B/B', D1, D2, D3, E, F and G that assemble in a heptameric protein ring on the Sm site of the small nuclear RNA to form the core snRNP, and at least 3 U1 snRNP-specific proteins U1-70K, U1-A and U1-C. U1-C interacts with U1 snRNA and the 5' splice-site region of the pre-mRNA.

The protein localises to the nucleus. In terms of biological role, component of the spliceosomal U1 snRNP, which is essential for recognition of the pre-mRNA 5' splice-site and the subsequent assembly of the spliceosome. U1-C is directly involved in initial 5' splice-site recognition for both constitutive and regulated alternative splicing. The interaction with the 5' splice-site seems to precede base-pairing between the pre-mRNA and the U1 snRNA. Stimulates commitment or early (E) complex formation by stabilizing the base pairing of the 5' end of the U1 snRNA and the 5' splice-site region. The polypeptide is U1 small nuclear ribonucleoprotein C (Mycosarcoma maydis (Corn smut fungus)).